The following is a 173-amino-acid chain: Inorganic pyrophosphatase (173 aa).

K29, R43, and Y55 together coordinate substrate. Mg(2+) is bound by residues D65, D70, and D102. Y141 provides a ligand contact to substrate.

It belongs to the PPase family. In terms of assembly, homohexamer. Mg(2+) is required as a cofactor.

It is found in the cytoplasm. The catalysed reaction is diphosphate + H2O = 2 phosphate + H(+). Catalyzes the hydrolysis of inorganic pyrophosphate (PPi) forming two phosphate ions. The protein is Inorganic pyrophosphatase of Gluconobacter oxydans (strain 621H) (Gluconobacter suboxydans).